The primary structure comprises 543 residues: Carotenoid 9,10(9',10')-cleavage dioxygenase 1 (543 aa).

Fe cation is bound by residues histidine 224, histidine 272, histidine 338, and histidine 528.

This sequence belongs to the carotenoid oxygenase family. In terms of assembly, homodimer. Requires Fe(2+) as cofactor.

The catalysed reaction is all-trans-zeaxanthin + 2 O2 = 4,9-dimethyldodeca-2,4,6,8,10-pentaenedial + 2 (3R)-hydroxy-beta-ionone. Its function is as follows. Cleaves a variety of carotenoids at the 9-10 and 9'-10' double bonds. Probably not involved in abscisic acid biosynthesis. In Phaseolus vulgaris (Kidney bean), this protein is Carotenoid 9,10(9',10')-cleavage dioxygenase 1 (CCD1).